A 662-amino-acid polypeptide reads, in one-letter code: Carboxysome assembly protein CsoS2 (662 aa).

Residues 1–227 form an N-terminal domain region; the sequence is MSTSNAQSGR…KRRNAKEAPQ (227 aa). Disordered stretches follow at residues 1–258, 277–322, and 342–419; these read MSTS…SESG, NCDV…TCSA, and PAKS…RGSC. One copy of the N-repeat 1 repeat lies at 8–27; that stretch reads SGRAAAIARRNAQVKGKGYT. 2 stretches are compositionally biased toward low complexity: residues 28–57 and 64–76; these read ASAA…SQPS and SVAP…ASAA. Residues 58-72 form an N-repeat 2 repeat; sequence RSRRKVSVAPTATPA. The segment covering 120-135 has biased composition (basic and acidic residues); sequence RQAKAEKPTKRSERRT. A compositionally biased stretch (polar residues) spans 141–150; the sequence is VASQQPSGRL. The stretch at 147-168 is one N-repeat 3 repeat; it reads SGRLQSKAYRKAQAKGKAGQEA. 3 stretches are compositionally biased toward low complexity: residues 161–170, 237–247, and 289–300; these read KGKAGQEAFK, GQSVSGTQVGQ, and VTQTQTTRGQVV. M-repeat repeat units lie at residues 228 to 278, 288 to 338, 388 to 436, 446 to 491, and 496 to 550; these read KVGE…SKNC, KVTQ…KMYC, KVMP…AKAC, KVTA…TEQF, and VDEQ…AMVC. The segment at 228-559 is middle region; it reads KVGESQTLHG…CDSTNAAAPG (332 aa). Residues 391–404 are compositionally biased toward polar residues; that stretch reads PSQTAKGNTTTGSQ. The C-terminal domain stretch occupies residues 560-631; sequence ESDFPAMIGQ…SPMGASQYRP (72 aa). The C-repeat 1 repeat unit spans residues 564–572; sequence PAMIGQAQP. 2 disordered regions span residues 588–607 and 619–662; these read KITG…DGPW and AGQS…GARA. A C-terminal peptide region spans residues 632-662; the sequence is VNNEVPMSPITGSSGNTDTGAKVTLSGGARA. Over residues 641-650 the composition is skewed to polar residues; sequence ITGSSGNTDT.

It belongs to the CsoS2 family. Interacts via its N-terminal repeats with RuBisCO. Interacts with the major shell protein CsoS1. Post-translationally, unlike H.neapolitanus and predictions for P.marinus strain MIT 9313, this protein is not thought to have ribosomal frameshifting.

It is found in the carboxysome. Required for alpha-carboxysome (Cb) assembly, mediates interaction between RuBisCO and the Cb shell. The protein is probably intrinsically disordered. The C-terminal repeats act as the encapsulation signal to target proteins to the Cb; they are necessary and sufficient to target both CsoS2 and foreign proteins to the Cb. The N-terminal repeats of this protein bind simultaneously to both subunits of RuBisCO. Probably also interacts with the major shell proteins (CsoS1); that interaction would increase the local concentration of CsoS2 so that it can condense RuBisCO and full carboxysomes can be formed. The polypeptide is Carboxysome assembly protein CsoS2 (Hydrogenovibrio crunogenus (strain DSM 25203 / XCL-2) (Thiomicrospira crunogena)).